A 131-amino-acid chain; its full sequence is Con-Ins Q1b (131 aa).

The signal sequence occupies residues 1 to 24; it reads MTTSSYFLLVALGLLLYLCQSSFG. 4 disulfides stabilise this stretch: cysteine 29–cysteine 107, cysteine 41–cysteine 110, cysteine 53–cysteine 123, and cysteine 109–cysteine 114. Residues 59 to 92 constitute a propeptide, c peptide; sequence LQGGTDDARKKRGRASLLRKRRGFLSMLKARAKR. Glutamate 118 carries the post-translational modification 4-carboxyglutamate; partial. Serine 130 is subject to Serine amide.

This sequence belongs to the insulin family. In terms of assembly, heterodimer of A and B chains; disulfide-linked. In terms of tissue distribution, expressed by the venom gland.

The protein resides in the secreted. In terms of biological role, this venom insulin facilitates prey capture by rapidly inducing hypoglycemic shock. Intraperitoneal injection of this peptide into zebrafish lowers blood glucose with the same potency than human insulin. In vivo, when applied to water, this peptide reduces overall locomotor activity of zebrafish larvae, observed as a significant decrease in the percentage of time spent swimming and movement frequency. This Conus quercinus (Oak cone) protein is Con-Ins Q1b.